The chain runs to 423 residues: Histidine--tRNA ligase (423 aa).

This sequence belongs to the class-II aminoacyl-tRNA synthetase family. In terms of assembly, homodimer.

The protein resides in the cytoplasm. It catalyses the reaction tRNA(His) + L-histidine + ATP = L-histidyl-tRNA(His) + AMP + diphosphate + H(+). This chain is Histidine--tRNA ligase, found in Desulfosudis oleivorans (strain DSM 6200 / JCM 39069 / Hxd3) (Desulfococcus oleovorans).